The chain runs to 315 residues: Ribosomal RNA small subunit methyltransferase H (315 aa).

S-adenosyl-L-methionine is bound by residues 37-39 (GGH), Asp-57, Phe-83, Asp-105, and Gln-112.

The protein belongs to the methyltransferase superfamily. RsmH family.

Its subcellular location is the cytoplasm. It carries out the reaction cytidine(1402) in 16S rRNA + S-adenosyl-L-methionine = N(4)-methylcytidine(1402) in 16S rRNA + S-adenosyl-L-homocysteine + H(+). Its function is as follows. Specifically methylates the N4 position of cytidine in position 1402 (C1402) of 16S rRNA. The protein is Ribosomal RNA small subunit methyltransferase H of Pseudomonas fluorescens (strain ATCC BAA-477 / NRRL B-23932 / Pf-5).